Reading from the N-terminus, the 460-residue chain is Elongation factor 1-alpha (460 aa).

Position 2 is a n,N,N-trimethylglycine (Gly2). An N6,N6-dimethyllysine; alternate modification is found at Lys3. An N6-methyllysine; alternate modification is found at Lys3. Positions 6–241 constitute a tr-type G domain; that stretch reads KTHINVVVIG…DSIEPPKRPT (236 aa). The G1 stretch occupies residues 15–22; that stretch reads GHVDSGKS. 15–22 is a binding site for GTP; sequence GHVDSGKS. Lys31 bears the N6-methyllysine mark. The segment at 71-75 is G2; sequence GITID. Lys80 bears the N6,N6,N6-trimethyllysine mark. The interval 92-95 is G3; that stretch reads DAPG. Residues 92 to 96 and 154 to 157 each bind GTP; these read DAPGH and NKMD. The segment at 154–157 is G4; sequence NKMD. Residues 193–195 are G5; the sequence is SGF. Lys317 bears the N6,N6-dimethyllysine; alternate mark. Lys317 is modified (N6-methyllysine; alternate). Lys391 carries the post-translational modification N6-methyllysine.

This sequence belongs to the TRAFAC class translation factor GTPase superfamily. Classic translation factor GTPase family. EF-Tu/EF-1A subfamily.

The protein resides in the cytoplasm. Its function is as follows. This protein promotes the GTP-dependent binding of aminoacyl-tRNA to the A-site of ribosomes during protein biosynthesis. This chain is Elongation factor 1-alpha (TEF), found in Podospora anserina (Pleurage anserina).